We begin with the raw amino-acid sequence, 221 residues long: MGNMQERPSETIDRERKRLVETLQADSGLLLDALVARGVLTGPEYEALDALPDAERRVRRLLLLVQSKGEAACQELLRCAQQTVSMPDPAWDWQHVGPGYRDRSYDPPCPGHWTPEAPSSGTTCPGLPRASEEEEIGGPEDSEAVQPRTPEEPELEAEATKGDEPDLEQEMEPEPEPEVEPEPEPEPEPEPEPEPEPEPEPEPEREPDFQEGDESEGCENT.

A lipid anchor (N-myristoyl glycine) is attached at Gly2. One can recognise a CARD domain in the interval 4 to 95 (MQERPSETID…MPDPAWDWQH (92 aa)). Positions 20-70 (VETLQADSGLLLDALVARGVLTGPEYEALDALPDAERRVRRLLLLVQSKGE) are essential for interaction with BAX. The interval 107 to 221 (PPCPGHWTPE…GDESEGCENT (115 aa)) is disordered. A compositionally biased stretch (acidic residues) spans 132–143 (EEEEIGGPEDSE). A Phosphothreonine; by CK2 modification is found at Thr149. Acidic residues-rich tracts occupy residues 165–201 (PDLE…EPEP) and 209–221 (FQEG…CENT).

In terms of assembly, oligomerizes (via CARD doamin). Interacts (via CARD domain) with CASP2; inhibits CASP2 activity in a phosphorylation-dependent manner. Interacts with CASP8; decreases CASP8 activity in a mitochondria localization- and phosphorylation-dependent manner and this interaction is dissociated by calcium. Interacts with TFPT; translocates NOL3 into the nucleus and negatively regulated TFPT-induced cell death. Interacts directly (via CARD domain) with FAS and FADD (via DED domain); inhibits death-inducing signaling complex (DISC) assembly by inhibiting the increase in FAS-FADD binding induced by FAS activation. Interacts (via CARD domain) with BAX (via a C-terminal 33 residues); inhibits BAX activation and translocation and consequently cytochrome c release from mitochondria. Interacts with PPM1G; may dephosphorylate NOL3. Interacts (via CARD domain) with BBC3 (via BH3 domain); preventing the association of BBC3 with BCL2 and resulting in activation of CASP8. Interacts (via CARD domain) with BAD(via BH3 domain); preventing the association of BAD with BCL2. Interacts directly (via CARD domain) with TNFRSF1A; inhibits TNF-signaling pathway. Post-translationally, phosphorylation at Thr-149 is required for its antiapoptotic effect by blocking death-inducing signaling complex (DISC) activity through the control of interaction with CASP8. Phosphorylation at Thr-149 results in translocation to mitochondria and this translocation enables the binding to CASP8. Dephosphorylated at Thr-149 by calcineurin; doesn't inhibit the association between FADD and CASP8 and the consequent apoptosis. Polyubiquitinated by MDM2; promoting proteasomal-dependent degradation in response to apoptotic stimuli. Highly expressed in skeletal muscle, heart and medulla.

Its subcellular location is the cytoplasm. It localises to the mitochondrion. It is found in the sarcoplasmic reticulum. The protein localises to the membrane. Functionally, apoptosis repressor that blocks multiple modes of cell death. Inhibits extrinsic apoptotic pathways through two different ways. Firstly by interacting with FAS and FADD upon FAS activation blocking death-inducing signaling complex (DISC) assembly. Secondly by interacting with CASP8 in a mitochondria localization- and phosphorylation-dependent manner, limiting the amount of soluble CASP8 available for DISC-mediated activation. Inhibits intrinsic apoptotic pathway in response to a wide range of stresses, through its interaction with BAX resulting in BAX inactivation, preventing mitochondrial dysfunction and release of pro-apoptotic factors. Inhibits calcium-mediated cell death by functioning as a cytosolic calcium buffer, dissociating its interaction with CASP8 and maintaining calcium homeostasis. Negatively regulates oxidative stress-induced apoptosis by phosphorylation-dependent suppression of the mitochondria-mediated intrinsic pathway, by blocking CASP2 activation and BAX translocation. Negatively regulates hypoxia-induced apoptosis in part by inhibiting the release of cytochrome c from mitochondria in a caspase-independent manner. Also inhibits TNF-induced necrosis by preventing TNF-signaling pathway through TNFRSF1A interaction abrogating the recruitment of RIPK1 to complex I. Finally through its role as apoptosis repressor, promotes vascular remodeling through inhibition of apoptosis and stimulation of proliferation, in response to hypoxia. Inhibits too myoblast differentiation through caspase inhibition. This Rattus norvegicus (Rat) protein is Nucleolar protein 3 (Nol3).